Reading from the N-terminus, the 68-residue chain is Large ribosomal subunit protein bL32 (68 aa).

It belongs to the bacterial ribosomal protein bL32 family.

The protein is Large ribosomal subunit protein bL32 of Ruegeria pomeroyi (strain ATCC 700808 / DSM 15171 / DSS-3) (Silicibacter pomeroyi).